The sequence spans 367 residues: UDP-N-acetylglucosamine--N-acetylmuramyl-(pentapeptide) pyrophosphoryl-undecaprenol N-acetylglucosamine transferase (367 aa).

UDP-N-acetyl-alpha-D-glucosamine-binding positions include 15-17 (TGG), N127, R163, S191, I249, and Q294.

The protein belongs to the glycosyltransferase 28 family. MurG subfamily.

The protein localises to the cell inner membrane. It carries out the reaction di-trans,octa-cis-undecaprenyl diphospho-N-acetyl-alpha-D-muramoyl-L-alanyl-D-glutamyl-meso-2,6-diaminopimeloyl-D-alanyl-D-alanine + UDP-N-acetyl-alpha-D-glucosamine = di-trans,octa-cis-undecaprenyl diphospho-[N-acetyl-alpha-D-glucosaminyl-(1-&gt;4)]-N-acetyl-alpha-D-muramoyl-L-alanyl-D-glutamyl-meso-2,6-diaminopimeloyl-D-alanyl-D-alanine + UDP + H(+). The protein operates within cell wall biogenesis; peptidoglycan biosynthesis. In terms of biological role, cell wall formation. Catalyzes the transfer of a GlcNAc subunit on undecaprenyl-pyrophosphoryl-MurNAc-pentapeptide (lipid intermediate I) to form undecaprenyl-pyrophosphoryl-MurNAc-(pentapeptide)GlcNAc (lipid intermediate II). This chain is UDP-N-acetylglucosamine--N-acetylmuramyl-(pentapeptide) pyrophosphoryl-undecaprenol N-acetylglucosamine transferase, found in Burkholderia pseudomallei (strain 668).